The following is a 242-amino-acid chain: MSEWLFDLGNSRFKYAPLHGNRAGQVQAWAHGAEAMDAAALAALPSGRIAYVASVAAPALTQRMIACLQERFTQVRIVRTTAECAGIRIAYADPSRFGVDRFLALLGARGDAPVLVAGVGTALTIDVLGADGLHHGGRIAASPTTMREALHARAVQLPASGGDYVELAIDTDDALTSGCDGAAVALIERSLQHAQRSLGVPVRLLVHGGGAPPLLPLLPDATFRAALVLDGLATWATAASSP.

7–14 serves as a coordination point for ATP; the sequence is DLGNSRFK. Substrate is bound by residues tyrosine 91 and 98 to 101; that span reads GVDR. Aspartate 100 acts as the Proton acceptor in catalysis. Threonine 121 contributes to the ATP binding site. Threonine 171 contributes to the substrate binding site.

The protein belongs to the type III pantothenate kinase family. Homodimer. NH4(+) is required as a cofactor. K(+) serves as cofactor.

Its subcellular location is the cytoplasm. The catalysed reaction is (R)-pantothenate + ATP = (R)-4'-phosphopantothenate + ADP + H(+). It functions in the pathway cofactor biosynthesis; coenzyme A biosynthesis; CoA from (R)-pantothenate: step 1/5. Its function is as follows. Catalyzes the phosphorylation of pantothenate (Pan), the first step in CoA biosynthesis. The polypeptide is Type III pantothenate kinase (Xanthomonas axonopodis pv. citri (strain 306)).